A 141-amino-acid chain; its full sequence is Large ribosomal subunit protein uL11 (141 aa).

The protein belongs to the universal ribosomal protein uL11 family. As to quaternary structure, part of the ribosomal stalk of the 50S ribosomal subunit. Interacts with L10 and the large rRNA to form the base of the stalk. L10 forms an elongated spine to which L12 dimers bind in a sequential fashion forming a multimeric L10(L12)X complex. In terms of processing, one or more lysine residues are methylated.

Forms part of the ribosomal stalk which helps the ribosome interact with GTP-bound translation factors. The chain is Large ribosomal subunit protein uL11 from Prochlorococcus marinus (strain MIT 9313).